Consider the following 138-residue polypeptide: Probable DNA-directed RNA polymerases I, II, and III subunit RPABC2 (138 aa).

2 stretches are compositionally biased toward acidic residues: residues 1–27 (MADD…VIEE) and 35–46 (EEEDDDNNVDEN). Residues 1 to 46 (MADDDDYQDMDNDDFVDDNEMEDVIEEEQQRPDHEEEDDDNNVDEN) are disordered.

It belongs to the archaeal Rpo6/eukaryotic RPB6 RNA polymerase subunit family. As to quaternary structure, component of the RNA polymerase I (Pol I), RNA polymerase II (Pol II) and RNA polymerase III (Pol III) complexes consisting of at least 13, 12 and 17 subunits, respectively.

The protein localises to the nucleus. In terms of biological role, DNA-dependent RNA polymerases catalyze the transcription of DNA into RNA using the four ribonucleoside triphosphates as substrates. Common component of RNA polymerases I, II and III which synthesize ribosomal RNA precursors, mRNA precursors and many functional non-coding RNAs, and small RNAs, such as 5S rRNA and tRNAs, respectively. Pol II is the central component of the basal RNA polymerase II transcription machinery. Pols are composed of mobile elements that move relative to each other. In Pol II, RPB6 is part of the clamp element and together with parts of RPB1 and RPB2 forms a pocket to which the RPB4-RPB7 subcomplex binds. The protein is Probable DNA-directed RNA polymerases I, II, and III subunit RPABC2 of Caenorhabditis briggsae.